A 217-amino-acid polypeptide reads, in one-letter code: Somatotropin (217 aa).

The first 27 residues, 1–27 (MATGSHTATLLLAVALLGLPWPQEAGA), serve as a signal peptide directing secretion. Residue H46 coordinates Zn(2+). The cysteines at positions 79 and 190 are disulfide-linked. Residue S132 is modified to Phosphoserine. Zn(2+) is bound at residue E199. A disulfide bridge links C207 with C215.

It belongs to the somatotropin/prolactin family.

The protein localises to the secreted. Plays an important role in growth control. Its major role in stimulating body growth is to stimulate the liver and other tissues to secrete IGF1. It stimulates both the differentiation and proliferation of myoblasts. It also stimulates amino acid uptake and protein synthesis in muscle and other tissues. In Xanthonycticebus pygmaeus (Pygmy slow loris), this protein is Somatotropin (GH1).